Consider the following 148-residue polypeptide: Large ribosomal subunit protein uL15 (148 aa).

Over residues 1 to 11 the composition is skewed to basic and acidic residues; it reads MSEPIKLHDLR. The disordered stretch occupies residues 1-52; it reads MSEPIKLHDLRPAAGSNKAKTRVGRGEASKGKTAGRGTKGTKARKQVSAAFE.

The protein belongs to the universal ribosomal protein uL15 family. Part of the 50S ribosomal subunit.

Its function is as follows. Binds to the 23S rRNA. In Corynebacterium glutamicum (strain R), this protein is Large ribosomal subunit protein uL15.